The following is a 396-amino-acid chain: Elongation factor Tu (396 aa).

Residues 10–206 (KPHVNVGTIG…ALDSYIPTPE (197 aa)) enclose the tr-type G domain. Positions 19–26 (GHVDHGKT) are G1. 19–26 (GHVDHGKT) is a binding site for GTP. Residue threonine 26 participates in Mg(2+) binding. Residues 60–64 (GITIN) form a G2 region. The interval 81 to 84 (DCPG) is G3. GTP is bound by residues 81 to 85 (DCPGH) and 136 to 139 (NKCD). A G4 region spans residues 136 to 139 (NKCD). The interval 174–176 (SAK) is G5.

It belongs to the TRAFAC class translation factor GTPase superfamily. Classic translation factor GTPase family. EF-Tu/EF-1A subfamily. In terms of assembly, monomer.

The protein resides in the cytoplasm. The enzyme catalyses GTP + H2O = GDP + phosphate + H(+). In terms of biological role, GTP hydrolase that promotes the GTP-dependent binding of aminoacyl-tRNA to the A-site of ribosomes during protein biosynthesis. In Herminiimonas arsenicoxydans, this protein is Elongation factor Tu.